Reading from the N-terminus, the 601-residue chain is NADH-quinone oxidoreductase subunit C/D (601 aa).

Positions 1 to 192 are NADH dehydrogenase I subunit C; that stretch reads MIVPDLVADA…PPYSLTEDQE (192 aa). Positions 216–601 are NADH dehydrogenase I subunit D; the sequence is DFMFLNLGPN…IDFVMADVDR (386 aa).

This sequence in the N-terminal section; belongs to the complex I 30 kDa subunit family. The protein in the C-terminal section; belongs to the complex I 49 kDa subunit family. As to quaternary structure, NDH-1 is composed of 13 different subunits. Subunits NuoB, CD, E, F, and G constitute the peripheral sector of the complex.

The protein resides in the cell inner membrane. It catalyses the reaction a quinone + NADH + 5 H(+)(in) = a quinol + NAD(+) + 4 H(+)(out). Its function is as follows. NDH-1 shuttles electrons from NADH, via FMN and iron-sulfur (Fe-S) centers, to quinones in the respiratory chain. The immediate electron acceptor for the enzyme in this species is believed to be ubiquinone. Couples the redox reaction to proton translocation (for every two electrons transferred, four hydrogen ions are translocated across the cytoplasmic membrane), and thus conserves the redox energy in a proton gradient. The sequence is that of NADH-quinone oxidoreductase subunit C/D from Gluconacetobacter diazotrophicus (strain ATCC 49037 / DSM 5601 / CCUG 37298 / CIP 103539 / LMG 7603 / PAl5).